Here is a 399-residue protein sequence, read N- to C-terminus: Protein LIGULELESS 1 (399 aa).

The disordered stretch occupies residues 1–28 (MMNLSAAANGRDEFPPYVVPSNAAAPPP). Over residues 15 to 24 (PPYVVPSNAA) the composition is skewed to low complexity. Residues 182-260 (PPRCQAEGCK…ADHNRRRRKS (79 aa)) form an SBP-type zinc finger. Zn(2+)-binding residues include C185, C190, C207, H210, C227, C230, H234, and C246. Residues 243–259 (KKSCRKRLADHNRRRRK) carry the Bipartite nuclear localization signal motif. Residues 250–292 (LADHNRRRRKSKPSDADAGDKKRAHANKAAAAKDKAESSSKNM) are disordered. Over residues 261 to 270 (KPSDADAGDK) the composition is skewed to basic and acidic residues.

Leaf ligular region, blade and sheath.

The protein resides in the nucleus. Functionally, involved in the formation of ligules and auricles during leaf organogenesis. This Zea mays (Maize) protein is Protein LIGULELESS 1 (LG1).